A 226-amino-acid polypeptide reads, in one-letter code: Fibronectin type III domain-containing protein 9 (226 aa).

Residues Met1–Ala101 form the Fibronectin type-III domain. The chain crosses the membrane as a helical span at residues Leu113–Leu133.

The protein localises to the membrane. The chain is Fibronectin type III domain-containing protein 9 (Fndc9) from Mus musculus (Mouse).